Here is a 327-residue protein sequence, read N- to C-terminus: Zinc transport protein ZntB (327 aa).

Residues 1–271 (MESFAGKELQ…AMNRRTYTMS (271 aa)) lie on the Cytoplasmic side of the membrane. The chain crosses the membrane as a helical span at residues 272–292 (LLAMVFLPTTFLTGLFGVNLG). Residues 293 to 300 (GIPGGDAP) are Periplasmic-facing. The helical transmembrane segment at 301-321 (FGFFTFCLMLVILVGGVAWWL) threads the bilayer. The Cytoplasmic segment spans residues 322-327 (KRSKWL).

The protein belongs to the CorA metal ion transporter (MIT) (TC 1.A.35) family.

It localises to the cell inner membrane. The enzyme catalyses Zn(2+)(out) + H(+)(out) = Zn(2+)(in) + H(+)(in). In terms of biological role, zinc transporter. Acts as a Zn(2+):proton symporter, which likely mediates zinc ion uptake. This is Zinc transport protein ZntB from Pectobacterium carotovorum subsp. carotovorum (strain PC1).